The chain runs to 209 residues: Uracil phosphoribosyltransferase (209 aa).

Residues R79, R104, and 131-139 contribute to the 5-phospho-alpha-D-ribose 1-diphosphate site; that span reads DPMLATGGS. Uracil contacts are provided by residues I194 and 199–201; that span reads GDA. A 5-phospho-alpha-D-ribose 1-diphosphate-binding site is contributed by D200.

Belongs to the UPRTase family. The cofactor is Mg(2+).

It carries out the reaction UMP + diphosphate = 5-phospho-alpha-D-ribose 1-diphosphate + uracil. It participates in pyrimidine metabolism; UMP biosynthesis via salvage pathway; UMP from uracil: step 1/1. Its activity is regulated as follows. Allosterically activated by GTP. Its function is as follows. Catalyzes the conversion of uracil and 5-phospho-alpha-D-ribose 1-diphosphate (PRPP) to UMP and diphosphate. This chain is Uracil phosphoribosyltransferase, found in Levilactobacillus brevis (strain ATCC 367 / BCRC 12310 / CIP 105137 / JCM 1170 / LMG 11437 / NCIMB 947 / NCTC 947) (Lactobacillus brevis).